We begin with the raw amino-acid sequence, 207 residues long: Transcriptional regulatory protein RcsA (207 aa).

Residues 131-196 (LTLPTLSLSK…VIYHIVRLTE (66 aa)) enclose the HTH luxR-type domain. The segment at residues 155–174 (TSQISTQMNIKAKTVSSHKG) is a DNA-binding region (H-T-H motif).

The protein belongs to the RcsA family.

In terms of biological role, component of the Rcs signaling system, which controls transcription of numerous genes. Binds to DNA to regulate expression of genes. The sequence is that of Transcriptional regulatory protein RcsA from Klebsiella aerogenes (Enterobacter aerogenes).